The primary structure comprises 213 residues: Redox-sensing transcriptional repressor Rex (213 aa).

Residues 17–56 (LYYRIFKRFYADQVEKASSKQIADAMGIDSATVRRDFSYF) constitute a DNA-binding region (H-T-H motif). Position 91-96 (91-96 (GCGNIG)) interacts with NAD(+).

The protein belongs to the transcriptional regulatory Rex family. As to quaternary structure, homodimer.

It is found in the cytoplasm. Its function is as follows. Modulates transcription in response to changes in cellular NADH/NAD(+) redox state. The chain is Redox-sensing transcriptional repressor Rex from Streptococcus uberis (strain ATCC BAA-854 / 0140J).